The chain runs to 121 residues: Transposase InsC for insertion element IS2A (121 aa).

This sequence belongs to the transposase 8 family.

Its function is as follows. Involved in the transposition of the insertion sequence IS2. In Escherichia coli (strain K12), this protein is Transposase InsC for insertion element IS2A (insC1).